A 292-amino-acid chain; its full sequence is Homoserine kinase (292 aa).

84 to 94 (PFSRGLGSSSA) contacts ATP.

This sequence belongs to the GHMP kinase family. Homoserine kinase subfamily.

The protein resides in the cytoplasm. The catalysed reaction is L-homoserine + ATP = O-phospho-L-homoserine + ADP + H(+). The protein operates within amino-acid biosynthesis; L-threonine biosynthesis; L-threonine from L-aspartate: step 4/5. In terms of biological role, catalyzes the ATP-dependent phosphorylation of L-homoserine to L-homoserine phosphate. The chain is Homoserine kinase from Campylobacter hominis (strain ATCC BAA-381 / DSM 21671 / CCUG 45161 / LMG 19568 / NCTC 13146 / CH001A).